The primary structure comprises 362 residues: 3-dehydroquinate synthase (362 aa).

NAD(+) is bound by residues 72 to 77 (DGEQYK), 106 to 110 (GVVGD), 130 to 131 (TT), lysine 143, lysine 152, and 170 to 173 (CLKT). Residues glutamate 185, histidine 248, and histidine 265 each contribute to the Zn(2+) site.

It belongs to the sugar phosphate cyclases superfamily. Dehydroquinate synthase family. The cofactor is Co(2+). Zn(2+) serves as cofactor. Requires NAD(+) as cofactor.

Its subcellular location is the cytoplasm. It carries out the reaction 7-phospho-2-dehydro-3-deoxy-D-arabino-heptonate = 3-dehydroquinate + phosphate. The protein operates within metabolic intermediate biosynthesis; chorismate biosynthesis; chorismate from D-erythrose 4-phosphate and phosphoenolpyruvate: step 2/7. Its function is as follows. Catalyzes the conversion of 3-deoxy-D-arabino-heptulosonate 7-phosphate (DAHP) to dehydroquinate (DHQ). This chain is 3-dehydroquinate synthase, found in Aliivibrio fischeri (strain ATCC 700601 / ES114) (Vibrio fischeri).